The primary structure comprises 436 residues: Suppressor of cytokine signaling 4 (436 aa).

Residues 1 to 25 (MAENNSKNVDVRPKTSRSRSADRKD) form a disordered region. The span at 9-25 (VDVRPKTSRSRSADRKD) shows a compositional bias: basic and acidic residues. The region spanning 283-378 (CYWGVMDKYA…FFEPLLSTPL (96 aa)) is the SH2 domain. One can recognise an SOCS box domain in the interval 373 to 422 (LLSTPLIRTFPFSLQHICRTVICNCTTYDGIDALPIPSPMKLYLKEYHYK).

Its pathway is protein modification; protein ubiquitination. SOCS family proteins form part of a classical negative feedback system that regulates cytokine signal transduction. Substrate-recognition component of a SCF-like ECS (Elongin BC-CUL2/5-SOCS-box protein) E3 ubiquitin-protein ligase complex which mediates the ubiquitination and subsequent proteasomal degradation of target proteins. Inhibits EGF signaling by mediating the degradation of the Tyr-phosphorylated EGF receptor/EGFR. This is Suppressor of cytokine signaling 4 (Socs4) from Mus musculus (Mouse).